A 260-amino-acid polypeptide reads, in one-letter code: Proteasome assembly chaperone 2 (260 aa).

The protein belongs to the PSMG2 family. As to quaternary structure, forms a heterodimer with psmg1. In terms of processing, degraded by the proteasome upon completion of 20S proteasome maturation.

It is found in the nucleus. Chaperone protein which promotes assembly of the 20S proteasome as part of a heterodimer with psmg1. The polypeptide is Proteasome assembly chaperone 2 (Danio rerio (Zebrafish)).